Reading from the N-terminus, the 81-residue chain is Putative membrane protein insertion efficiency factor (81 aa).

The interval 61–81 (NDGGFDPVPPAPSSRTSSIAE) is disordered.

The protein belongs to the UPF0161 family.

It is found in the cell inner membrane. Its function is as follows. Could be involved in insertion of integral membrane proteins into the membrane. The sequence is that of Putative membrane protein insertion efficiency factor from Pseudomonas putida (strain ATCC 700007 / DSM 6899 / JCM 31910 / BCRC 17059 / LMG 24140 / F1).